The primary structure comprises 102 residues: Small ribosomal subunit protein uS10 (102 aa).

The protein belongs to the universal ribosomal protein uS10 family. Part of the 30S ribosomal subunit.

In terms of biological role, involved in the binding of tRNA to the ribosomes. This is Small ribosomal subunit protein uS10 from Staphylococcus saprophyticus subsp. saprophyticus (strain ATCC 15305 / DSM 20229 / NCIMB 8711 / NCTC 7292 / S-41).